A 209-amino-acid polypeptide reads, in one-letter code: Large ribosomal subunit protein uL3 (209 aa).

Position 150 is an N5-methylglutamine (Q150).

The protein belongs to the universal ribosomal protein uL3 family. As to quaternary structure, part of the 50S ribosomal subunit. Forms a cluster with proteins L14 and L19. In terms of processing, methylated by PrmB.

Functionally, one of the primary rRNA binding proteins, it binds directly near the 3'-end of the 23S rRNA, where it nucleates assembly of the 50S subunit. In Vibrio vulnificus (strain YJ016), this protein is Large ribosomal subunit protein uL3.